The primary structure comprises 338 residues: Heat-inducible transcription repressor HrcA (338 aa).

Belongs to the HrcA family.

Negative regulator of class I heat shock genes (grpE-dnaK-dnaJ and groELS operons). Prevents heat-shock induction of these operons. The sequence is that of Heat-inducible transcription repressor HrcA from Bacillus cereus (strain 03BB102).